The primary structure comprises 472 residues: Relaxin-3 receptor 1 (472 aa).

At 1–81 (MQVASATPAA…ESTDTEARVR (81 aa)) the chain is on the extracellular side. N-linked (GlcNAc...) asparagine glycosylation is found at Asn-36 and Asn-40. A helical membrane pass occupies residues 82 to 102 (ILISAVYWVVCALGLAGNLLV). The Cytoplasmic segment spans residues 103–119 (LYLMKSKQGWRKSSINL). A helical membrane pass occupies residues 120–140 (FVTNLALTDFQFVLTLPFWAV). At 141–156 (ENALDFKWPFGKAMCK) the chain is on the extracellular side. Cys-155 and Cys-247 are oxidised to a cystine. A helical membrane pass occupies residues 157 to 177 (IVSMVTSMNMYASVFFLTAMS). Residues 178 to 215 (VARYHSVASALKSHRTRGRGRGDCCGQSLRESCCFSAK) are Cytoplasmic-facing. Residues 216–236 (VLCGLIWASAALASLPNAIFS) traverse the membrane as a helical segment. The Extracellular segment spans residues 237 to 270 (TTIRVLGEELCLMHFPDKLLGWDRQFWLGLYHLQ). Residues 271 to 291 (KVLLGFLLPLSIISLCYLLLV) form a helical membrane-spanning segment. Topologically, residues 292–298 (RFISDRR) are cytoplasmic. A helical membrane pass occupies residues 299-319 (VVGTTDAVGAAAAPGGGLSTA). Topologically, residues 320–332 (SARRRSKVTKSVT) are extracellular. The helical transmembrane segment at 333–353 (IVVLSFFLCWLPNQALTTWSI) threads the bilayer. Residues 354–472 (LIKFNAVPFS…YDLLPSSSAY (119 aa)) are Cytoplasmic-facing.

It belongs to the G-protein coupled receptor 1 family.

It localises to the cell membrane. Receptor for RNL3/relaxin-3. Binding of the ligand inhibit cAMP accumulation. This is Relaxin-3 receptor 1 (Rxfp3) from Mus musculus (Mouse).